The primary structure comprises 968 residues: RNA polymerase-associated protein RapA (968 aa).

The Helicase ATP-binding domain maps to 164-334; it reads DVGRRHAPRV…FARLRLLDPN (171 aa). Residue 177–184 coordinates ATP; that stretch reads DEVGLGKT. Positions 280–283 match the DEAH box motif; that stretch reads DEAH. The Helicase C-terminal domain occupies 490 to 662; that stretch reads RVEWLMGYLT…YLASPDQTEG (173 aa).

The protein belongs to the SNF2/RAD54 helicase family. RapA subfamily. In terms of assembly, interacts with the RNAP. Has a higher affinity for the core RNAP than for the holoenzyme. Its ATPase activity is stimulated by binding to RNAP.

Functionally, transcription regulator that activates transcription by stimulating RNA polymerase (RNAP) recycling in case of stress conditions such as supercoiled DNA or high salt concentrations. Probably acts by releasing the RNAP, when it is trapped or immobilized on tightly supercoiled DNA. Does not activate transcription on linear DNA. Probably not involved in DNA repair. In Shigella boydii serotype 4 (strain Sb227), this protein is RNA polymerase-associated protein RapA.